The chain runs to 215 residues: UPF0488 protein C8orf33 homolog (215 aa).

Disordered stretches follow at residues 1 to 72 (MLED…DEQL), 87 to 111 (LRTQ…RSSK), and 158 to 199 (CKPV…DTKP). A compositionally biased stretch (basic residues) spans 29–39 (AKKHKKKKKKK). The segment covering 40-63 (AGEGKDDQQRETKTTEGETAKQET) has biased composition (basic and acidic residues). Basic and acidic residues-rich tracts occupy residues 167 to 178 (ERNTQPKNKTDG) and 188 to 199 (TNEHTKTEDTKP).

It belongs to the UPF0488 family.

The polypeptide is UPF0488 protein C8orf33 homolog (Danio rerio (Zebrafish)).